A 205-amino-acid chain; its full sequence is Small ribosomal subunit protein uS4 (205 aa).

The tract at residues 1–44 (MSKRHSQKYKIDRRMGENLWGRPKSPVNSRSYGPGQHGQRRKTK) is disordered. The S4 RNA-binding domain maps to 94–173 (SRLDAIVYRC…LPEYIDLDAK (80 aa)).

Belongs to the universal ribosomal protein uS4 family. In terms of assembly, part of the 30S ribosomal subunit. Contacts protein S5. The interaction surface between S4 and S5 is involved in control of translational fidelity.

Functionally, one of the primary rRNA binding proteins, it binds directly to 16S rRNA where it nucleates assembly of the body of the 30S subunit. In terms of biological role, with S5 and S12 plays an important role in translational accuracy. This is Small ribosomal subunit protein uS4 from Maricaulis maris (strain MCS10) (Caulobacter maris).